The primary structure comprises 246 residues: MALTLYPAIDLKDGACVRLRRGEMDQATVYAEDPAAQARTFEAAGFTALHVVDLNGAFAGRPVNGEAVRAILTAVAMPVQLGGGIRDMAGIAAWIELGISRVILGSAAVKNPALVREAAAAFPGRIIVGIDARDGMVATEGWAETSSLPATEMAMRLQDAGIAAIIHTDIARDGMLQGLNLDATEALAAAIAIPVIASGGVAGIEDIRNLRAAAARTPNLAGTIIGRALYDGRIDPQAALAEAAAC.

Asp-10 functions as the Proton acceptor in the catalytic mechanism. Asp-131 (proton donor) is an active-site residue.

This sequence belongs to the HisA/HisF family.

It is found in the cytoplasm. The enzyme catalyses 1-(5-phospho-beta-D-ribosyl)-5-[(5-phospho-beta-D-ribosylamino)methylideneamino]imidazole-4-carboxamide = 5-[(5-phospho-1-deoxy-D-ribulos-1-ylimino)methylamino]-1-(5-phospho-beta-D-ribosyl)imidazole-4-carboxamide. Its pathway is amino-acid biosynthesis; L-histidine biosynthesis; L-histidine from 5-phospho-alpha-D-ribose 1-diphosphate: step 4/9. In Acidiphilium cryptum (strain JF-5), this protein is 1-(5-phosphoribosyl)-5-[(5-phosphoribosylamino)methylideneamino] imidazole-4-carboxamide isomerase.